The chain runs to 228 residues: Small ribosomal subunit protein uS2 (228 aa).

This sequence belongs to the universal ribosomal protein uS2 family.

The chain is Small ribosomal subunit protein uS2 from Blochmanniella pennsylvanica (strain BPEN).